The following is a 40-amino-acid chain: Natriuretic peptide HsNP-b (40 aa).

Positions 1-8 (SGSKTAKI) are excised as a propeptide. The disordered stretch occupies residues 1 to 40 (SGSKTAKIGDGCFGVPIDHIGSTTDLGCGRPRPKPTPRGS). Cys12 and Cys28 are joined by a disulfide. Positions 31–40 (PRPKPTPRGS) are enriched in basic residues.

This sequence belongs to the natriuretic peptide family. In terms of tissue distribution, expressed by the venom gland.

It localises to the secreted. In terms of biological role, snake venom natriuretic peptide that targets both NPR1 and NPR2. Exhibits hypotensive and vasodepressor activities. This chain is Natriuretic peptide HsNP-b, found in Hoplocephalus stephensii (Stephens's banded snake).